Consider the following 384-residue polypeptide: Dual-specificity RNA methyltransferase RlmN (384 aa).

The Proton acceptor role is filled by Glu-105. The Radical SAM core domain occupies 111 to 350; it reads EDDRATLCVS…TIVRKTRGDD (240 aa). Cys-118 and Cys-355 are disulfide-bonded. 3 residues coordinate [4Fe-4S] cluster: Cys-125, Cys-129, and Cys-132. S-adenosyl-L-methionine-binding positions include 179–180, Ser-211, 233–235, and Asn-312; these read GE and SLH. Cys-355 (S-methylcysteine intermediate) is an active-site residue.

Belongs to the radical SAM superfamily. RlmN family. [4Fe-4S] cluster is required as a cofactor.

Its subcellular location is the cytoplasm. It catalyses the reaction adenosine(2503) in 23S rRNA + 2 reduced [2Fe-2S]-[ferredoxin] + 2 S-adenosyl-L-methionine = 2-methyladenosine(2503) in 23S rRNA + 5'-deoxyadenosine + L-methionine + 2 oxidized [2Fe-2S]-[ferredoxin] + S-adenosyl-L-homocysteine. It carries out the reaction adenosine(37) in tRNA + 2 reduced [2Fe-2S]-[ferredoxin] + 2 S-adenosyl-L-methionine = 2-methyladenosine(37) in tRNA + 5'-deoxyadenosine + L-methionine + 2 oxidized [2Fe-2S]-[ferredoxin] + S-adenosyl-L-homocysteine. Specifically methylates position 2 of adenine 2503 in 23S rRNA and position 2 of adenine 37 in tRNAs. m2A2503 modification seems to play a crucial role in the proofreading step occurring at the peptidyl transferase center and thus would serve to optimize ribosomal fidelity. This Escherichia fergusonii (strain ATCC 35469 / DSM 13698 / CCUG 18766 / IAM 14443 / JCM 21226 / LMG 7866 / NBRC 102419 / NCTC 12128 / CDC 0568-73) protein is Dual-specificity RNA methyltransferase RlmN.